We begin with the raw amino-acid sequence, 603 residues long: NADH-ubiquinone oxidoreductase chain 5 (603 aa).

The next 14 helical transmembrane spans lie at 4 to 24 (YTSI…ATLV), 36 to 56 (VKTT…LYIF), 87 to 107 (MMFI…SLWY), 122 to 142 (LIFL…QLFI), 171 to 191 (AVLY…WFLL), 211 to 233 (LPLM…HPWL), 241 to 261 (TPVS…FLLI), 272 to 292 (LTQN…AMCA), 301 to 320 (IVAF…IGIN), 325 to 347 (AFLH…GSII), 370 to 390 (STSL…TGFY), 406 to 422 (AWAL…TSAY), 488 to 508 (LLAL…TLMT), and 583 to 603 (MIKL…LLMV).

It belongs to the complex I subunit 5 family. Core subunit of respiratory chain NADH dehydrogenase (Complex I) which is composed of 45 different subunits.

It is found in the mitochondrion inner membrane. The enzyme catalyses a ubiquinone + NADH + 5 H(+)(in) = a ubiquinol + NAD(+) + 4 H(+)(out). Core subunit of the mitochondrial membrane respiratory chain NADH dehydrogenase (Complex I) which catalyzes electron transfer from NADH through the respiratory chain, using ubiquinone as an electron acceptor. Essential for the catalytic activity and assembly of complex I. This is NADH-ubiquinone oxidoreductase chain 5 (MT-ND5) from Papio hamadryas (Hamadryas baboon).